We begin with the raw amino-acid sequence, 151 residues long: Probable ribonuclease P/MRP protein subunit POP5 (151 aa).

It belongs to the eukaryotic/archaeal RNase P protein component 2 family. As to quaternary structure, component of nuclear RNase P and RNase MRP ribonucleoproteins. Interacts with GAF1/RPP30.

Its subcellular location is the nucleus. It is found in the nucleolus. Its function is as follows. Essential protein required during embryogenesis. Component of ribonuclease P, a protein complex that generates mature tRNA molecules by cleaving their 5'-ends. Also a component of RNase MRP. This is Probable ribonuclease P/MRP protein subunit POP5 (EMB1687) from Arabidopsis thaliana (Mouse-ear cress).